Reading from the N-terminus, the 674-residue chain is Multifunctional alkene reductase/demethylase OYE (674 aa).

FMN-binding residues include G62 and Q105. H175 acts as the Proton donor in catalysis. FMN is bound by residues R223 and K299. C345, C351, and C358 together coordinate [4Fe-4S] cluster. Positions 391, 418, and 428 each coordinate FAD.

This sequence in the N-terminal section; belongs to the NADH:flavin oxidoreductase/NADH oxidase family. Requires [4Fe-4S] cluster as cofactor. FAD serves as cofactor. It depends on FMN as a cofactor.

The catalysed reaction is 3-phenylpropanoate + NAD(+) = (E)-cinnamate + NADH + H(+). The enzyme catalyses N-methyl-L-proline + NAD(+) + H2O = L-proline + formaldehyde + NADH + H(+). In terms of biological role, a member of the 2-enoate reductase subfamily of old yellow enzymes (OYE) able to reduce alpha/beta alkenes near electron-withdrawing groups as well as perform oxidative demethylation chemistry. Prefers NADH over NADPH as cosubstrate. May play a role in osmotic stress response in situ. This chain is Multifunctional alkene reductase/demethylase OYE, found in Caballeronia cordobensis (Burkholderia cordobensis).